A 642-amino-acid polypeptide reads, in one-letter code: Threonine--tRNA ligase (642 aa).

Residues 1 to 61 (MPVITLPDGS…ETDAELSIIT (61 aa)) enclose the TGS domain. The segment at 243 to 534 (DHRKIGKQLD…LIEEYAGRFP (292 aa)) is catalytic. Zn(2+)-binding residues include Cys-334, His-385, and His-511.

Belongs to the class-II aminoacyl-tRNA synthetase family. In terms of assembly, homodimer. Requires Zn(2+) as cofactor.

The protein resides in the cytoplasm. The enzyme catalyses tRNA(Thr) + L-threonine + ATP = L-threonyl-tRNA(Thr) + AMP + diphosphate + H(+). Functionally, catalyzes the attachment of threonine to tRNA(Thr) in a two-step reaction: L-threonine is first activated by ATP to form Thr-AMP and then transferred to the acceptor end of tRNA(Thr). Also edits incorrectly charged L-seryl-tRNA(Thr). The sequence is that of Threonine--tRNA ligase from Shewanella oneidensis (strain ATCC 700550 / JCM 31522 / CIP 106686 / LMG 19005 / NCIMB 14063 / MR-1).